Here is a 534-residue protein sequence, read N- to C-terminus: DNA-directed RNA polymerase III subunit RPC3 (534 aa).

The interval Pro-161–Val-181 is disordered. Ser-194 carries the phosphoserine modification. A disordered region spans residues Gly-197–Ile-228. The span at Gly-211–Ile-228 shows a compositional bias: basic and acidic residues.

The protein belongs to the eukaryotic RPC3/POLR3C RNA polymerase subunit family. As to quaternary structure, component of the RNA polymerase III complex consisting of 17 subunits: a ten-subunit horseshoe-shaped catalytic core composed of POLR3A/RPC1, POLR3B/RPC2, POLR1C/RPAC1, POLR1D/RPAC2, POLR3K/RPC10, POLR2E/RPABC1, POLR2F/RPABC2, POLR2H/RPABC3, POLR2K/RPABC4 and POLR2L/RPABC5; a mobile stalk composed of two subunits POLR3H/RPC8 and CRCP/RPC9, protruding from the core and functioning primarily in transcription initiation; and additional subunits homologous to general transcription factors of the RNA polymerase II machinery, POLR3C/RPC3-POLR3F/RPC6-POLR3G/RPC7 heterotrimer required for transcription initiation and POLR3D/RPC4-POLR3E/RPC5 heterodimer involved in both transcription initiation and termination. Directly interacts with POLR3G/RPC7 and POLR3GL. Directly interacts with POLR3F/RPC6. Interacts with GTF3C4. As part of the RNA polymerase III complex, interacts with PKP2.

The protein resides in the nucleus. In terms of biological role, DNA-dependent RNA polymerase catalyzes the transcription of DNA into RNA using the four ribonucleoside triphosphates as substrates. Specific peripheric component of RNA polymerase III (Pol III) which synthesizes small non-coding RNAs including 5S rRNA, snRNAs, tRNAs and miRNAs from at least 500 distinct genomic loci. Part of POLR3C/RPC3-POLR3F/RPC6-POLR3G/RPC7 heterotrimer, coordinates the dynamics of Pol III stalk and clamp modules during the transition from apo to elongation state. Pol III plays a key role in sensing and limiting infection by intracellular bacteria and DNA viruses. Acts as a nuclear and cytosolic DNA sensor involved in innate immune response. Can sense non-self dsDNA that serves as template for transcription into dsRNA. The non-self RNA polymerase III transcripts, such as Epstein-Barr virus-encoded RNAs (EBERs) induce type I interferon and NF-kappa-B through the RIG-I pathway. Preferentially binds single-stranded DNA (ssDNA) in a sequence-independent manner. The polypeptide is DNA-directed RNA polymerase III subunit RPC3 (Homo sapiens (Human)).